We begin with the raw amino-acid sequence, 889 residues long: Vacuolar protein sorting-associated protein 54 (889 aa).

Composition is skewed to polar residues over residues 1–14 (MSISETPHNKSQGL) and 30–44 (PSRNSDSGSFTIEGD). The tract at residues 1 to 44 (MSISETPHNKSQGLQKAAGRPKIVVPEGSPSRNSDSGSFTIEGD) is disordered. 2 positions are modified to phosphoserine: serine 69 and serine 72. The residue at position 74 (threonine 74) is a Phosphothreonine. Residues 286–321 (LSEVDNIQKRALDTMSELKELAQNIKTIDAENIRKK) adopt a coiled-coil conformation. Residues 729-744 (HDCENGRSEDKEKDEG) are compositionally biased toward basic and acidic residues. The interval 729-748 (HDCENGRSEDKEKDEGNETY) is disordered.

It belongs to the VPS54 family. Component of the Golgi-associated retrograde protein (GARP) complex, also called VFT (VPS fifty-three) complex, composed of VPS51, VPS52, VPS53 and VPS54. Also interacts with YPT6, TLG1, RBL2, SEC10, SEC15, EXO84 and ARL1.

The protein resides in the golgi apparatus. Its subcellular location is the trans-Golgi network membrane. It is found in the endosome membrane. The protein localises to the mitochondrion membrane. In terms of biological role, involved in retrograde transport from early and late endosomes to late Golgi by linking the vesicle through the t-SNARE TGL1 to the Golgi, leading to the membrane fusion between late Golgi and endosomal vesicles. Also seems to be involved in protein transport from Golgi to the plasma membrane and is required for the integrity of the actin cytoskeleton. This is Vacuolar protein sorting-associated protein 54 (VPS54) from Saccharomyces cerevisiae (strain ATCC 204508 / S288c) (Baker's yeast).